Reading from the N-terminus, the 820-residue chain is Probable ATP-dependent RNA helicase DDX23 (820 aa).

Over residues 1–42 the composition is skewed to basic and acidic residues; sequence MAGELADKKDRDASPSKEERKRSRTPDRERDRDRDRKSSPSK. The segment at 1–244 is disordered; the sequence is MAGELADKKD…QKIREEKDKS (244 aa). Phosphoserine is present on residues Ser14 and Ser16. The segment covering 43–65 has biased composition (basic residues); sequence DRKRHRSRDRRRGGSRSRSRSRS. Residues 66–105 show a composition bias toward basic and acidic residues; it reads KSAERERRHKERERDKERDRNKKDRDRDKDGHRRDKDRKR. Phosphoserine occurs at positions 107 and 109. 3 stretches are compositionally biased toward basic and acidic residues: residues 112-137, 147-226, and 233-244; these read RGKDFKSRKDRDSKKDEEDEHGDKKP, LLAK…RETN, and GRQKIREEKDKS. The Q motif motif lies at 391–419; the sequence is RSWKDSSLPPHILEVIDKCGYKEPTPIQR. The Helicase ATP-binding domain maps to 422–627; it reads IPIGLQNRDI…RSYLRRPAVV (206 aa). 435-442 contributes to the ATP binding site; sequence AETGSGKT. A DEAD box motif is present at residues 549 to 552; sequence DEAD. The Helicase C-terminal domain occupies 651 to 799; sequence KRKKLLAILE…SCPPELANHP (149 aa). Residues Lys686 and Lys811 each participate in a glycyl lysine isopeptide (Lys-Gly) (interchain with G-Cter in SUMO2) cross-link.

It belongs to the DEAD box helicase family. DDX23/PRP28 subfamily. As to quaternary structure, the phosphorylated form (by SRPK2) is a component of the U4/U6-U5 tri-snRNP complex composed of the U4, U6 and U5 snRNAs and at least PRPF3, PRPF4, PRPF6, PRPF8, PRPF31, SNRNP200, TXNL4A, WDR57, SNRNP40, DDX23, CD2BP2, PPIH, SNU13, EFTUD2, SART1 and USP39. Identified in the spliceosome C complex. Interacts with ERBB4. Interacts with ERCC6. In vitro phosphorylated by CLK1 and U1 snRNP-associated protein kinase. Phosphorylated by SRPK2 and this phosphorylation is required for its association with the tri-snRNP (U4/U6-U5 tri-small nuclear ribonucleoproteins) and subsequent spliceosomal B complex formation. May be phosphorylated by SRPK2 on Ser residues in the SR domain; the phosphorylation is required for the removal of inappropriate R-loops during transcription.

The protein localises to the nucleus. It localises to the chromosome. The enzyme catalyses ATP + H2O = ADP + phosphate + H(+). Its function is as follows. Involved in pre-mRNA splicing and its phosphorylated form (by SRPK2) is required for spliceosomal B complex formation. Independently of its spliceosome formation function, required for the suppression of incorrect R-loops formed during transcription; R-loops are composed of a DNA:RNA hybrid and the associated non-template single-stranded DNA. The chain is Probable ATP-dependent RNA helicase DDX23 from Pongo abelii (Sumatran orangutan).